Consider the following 211-residue polypeptide: Dephospho-CoA kinase (211 aa).

Residues 3 to 206 (VLGLTGGIGS…PGMKGPDPHA (204 aa)) enclose the DPCK domain. 11–16 (GSGKSI) is a binding site for ATP.

It belongs to the CoaE family.

Its subcellular location is the cytoplasm. The catalysed reaction is 3'-dephospho-CoA + ATP = ADP + CoA + H(+). It functions in the pathway cofactor biosynthesis; coenzyme A biosynthesis; CoA from (R)-pantothenate: step 5/5. In terms of biological role, catalyzes the phosphorylation of the 3'-hydroxyl group of dephosphocoenzyme A to form coenzyme A. The chain is Dephospho-CoA kinase from Syntrophotalea carbinolica (strain DSM 2380 / NBRC 103641 / GraBd1) (Pelobacter carbinolicus).